Consider the following 284-residue polypeptide: Bifunctional protein FolD (284 aa).

NADP(+)-binding positions include 165-167 (GRS), serine 190, and valine 231.

Belongs to the tetrahydrofolate dehydrogenase/cyclohydrolase family. In terms of assembly, homodimer.

The enzyme catalyses (6R)-5,10-methylene-5,6,7,8-tetrahydrofolate + NADP(+) = (6R)-5,10-methenyltetrahydrofolate + NADPH. The catalysed reaction is (6R)-5,10-methenyltetrahydrofolate + H2O = (6R)-10-formyltetrahydrofolate + H(+). Its pathway is one-carbon metabolism; tetrahydrofolate interconversion. In terms of biological role, catalyzes the oxidation of 5,10-methylenetetrahydrofolate to 5,10-methenyltetrahydrofolate and then the hydrolysis of 5,10-methenyltetrahydrofolate to 10-formyltetrahydrofolate. This Geobacillus kaustophilus (strain HTA426) protein is Bifunctional protein FolD.